The chain runs to 155 residues: Ribosomal RNA large subunit methyltransferase H (155 aa).

S-adenosyl-L-methionine contacts are provided by residues Leu72, Gly103, and Leu122–Leu127.

This sequence belongs to the RNA methyltransferase RlmH family. Homodimer.

It is found in the cytoplasm. It catalyses the reaction pseudouridine(1915) in 23S rRNA + S-adenosyl-L-methionine = N(3)-methylpseudouridine(1915) in 23S rRNA + S-adenosyl-L-homocysteine + H(+). In terms of biological role, specifically methylates the pseudouridine at position 1915 (m3Psi1915) in 23S rRNA. The protein is Ribosomal RNA large subunit methyltransferase H of Pasteurella multocida (strain Pm70).